A 269-amino-acid chain; its full sequence is Ribosomal RNA small subunit methyltransferase J (269 aa).

S-adenosyl-L-methionine is bound by residues 125 to 126 and D179; that span reads ER.

This sequence belongs to the methyltransferase superfamily. RsmJ family.

Its subcellular location is the cytoplasm. It carries out the reaction guanosine(1516) in 16S rRNA + S-adenosyl-L-methionine = N(2)-methylguanosine(1516) in 16S rRNA + S-adenosyl-L-homocysteine + H(+). Specifically methylates the guanosine in position 1516 of 16S rRNA. This chain is Ribosomal RNA small subunit methyltransferase J, found in Pseudomonas savastanoi pv. phaseolicola (strain 1448A / Race 6) (Pseudomonas syringae pv. phaseolicola (strain 1448A / Race 6)).